Here is a 325-residue protein sequence, read N- to C-terminus: MRLFTKIKGLAAVTCVAALASSAAFAQEMTLKLGHLANEQNAWHLAAVKFGEELSTLTDGRIAVEVFPNESLGKEIDLINGMQLGTVDMTITGESLQNWAPMAALLAVPYAYKSLEHMDEVASGEIGEQIKQQIIEKAQVRPIAFFARGPRNLTSQRPITSPADLDGMKMRVPNVPLFVDVWSALGASPTPMAFSEVFTSLQNGVIDGQENPLALIRSANFNEVQGYVNQTEHVRSWIYLTIAESTWAKLSEDDQNAVMQAAATAQEYERGLLLESLAEDRGYLESKGMTFVEVDGAAFQAAAKDAVLANVSEEIRPIVESLFSE.

The signal sequence occupies residues M1 to A26. Residues E75, G93–S95, R148–R151, R171, and N211 each bind D-mannonate. L-galactonate contacts are provided by residues E75, G93–S95, R148–R151, R171, and N211.

This sequence belongs to the bacterial solute-binding protein 7 family. In terms of assembly, the complex is comprised of an extracytoplasmic solute-binding protein and a heteromeric permease formed by two transmembrane proteins.

The protein resides in the periplasm. Functionally, solute-binding protein that binds L-galactonate and D-mannonate (in vitro). Probably part of a tripartite ATP-independent periplasmic (TRAP) transport system that mediates solute transport into the cytoplasm. This Roseobacter denitrificans (strain ATCC 33942 / OCh 114) (Erythrobacter sp. (strain OCh 114)) protein is Solute-binding protein RD1_1052.